An 81-amino-acid polypeptide reads, in one-letter code: Small ribosomal subunit protein bS16 (81 aa).

This sequence belongs to the bacterial ribosomal protein bS16 family.

The sequence is that of Small ribosomal subunit protein bS16 from Desulfotalea psychrophila (strain LSv54 / DSM 12343).